The chain runs to 300 residues: GTPase Era (300 aa).

The 169-residue stretch at 8-176 (RCGYVAIVGR…EGLIAKHLPE (169 aa)) folds into the Era-type G domain. The segment at 16-23 (GRPNVGKS) is G1. 16-23 (GRPNVGKS) contributes to the GTP binding site. Residues 42–46 (QTTRH) form a G2 region. The tract at residues 63 to 66 (DTPG) is G3. Residues 63 to 67 (DTPGM) and 125 to 128 (NKTD) each bind GTP. The interval 125-128 (NKTD) is G4. A G5 region spans residues 155-157 (VSA). The KH type-2 domain maps to 199–283 (VREKIMRQLG…MLNLWVKVKG (85 aa)).

The protein belongs to the TRAFAC class TrmE-Era-EngA-EngB-Septin-like GTPase superfamily. Era GTPase family. Monomer.

The protein localises to the cytoplasm. Its subcellular location is the cell inner membrane. Functionally, an essential GTPase that binds both GDP and GTP, with rapid nucleotide exchange. Plays a role in 16S rRNA processing and 30S ribosomal subunit biogenesis and possibly also in cell cycle regulation and energy metabolism. This is GTPase Era from Pseudomonas fluorescens (strain ATCC BAA-477 / NRRL B-23932 / Pf-5).